A 311-amino-acid chain; its full sequence is Glutaminase (311 aa).

Residues Ser-66, Asn-116, Glu-162, Asn-169, Tyr-193, Tyr-245, and Val-263 each contribute to the substrate site.

The protein belongs to the glutaminase family. As to quaternary structure, homotetramer.

It carries out the reaction L-glutamine + H2O = L-glutamate + NH4(+). The protein is Glutaminase of Rhodopseudomonas palustris (strain TIE-1).